We begin with the raw amino-acid sequence, 53 residues long: Insulin (53 aa).

A propeptide spans 1–30 (DVEPLLGFLSPKSGQENEVDDFPYKGQGEL) (c peptide). A disulfide bridge links C38 with C43.

It belongs to the insulin family. Heterodimer of a B chain and an A chain linked by two disulfide bonds.

It is found in the secreted. Its function is as follows. Insulin decreases blood glucose concentration. It increases cell permeability to monosaccharides, amino acids and fatty acids. It accelerates glycolysis, the pentose phosphate cycle, and glycogen synthesis in liver. In Anguilla anguilla (European freshwater eel), this protein is Insulin (ins).